Consider the following 450-residue polypeptide: Vacuolar cation/proton exchanger 1c (450 aa).

Residues 1–73 (MAPPESSHHH…LLGGPAAQLQ (73 aa)) lie on the Cytoplasmic side of the membrane. Residues 28–52 (AAEEEEKKEAAAWTPSSSSSMTGRK) form a disordered region. Residues 74–94 (EVLLGTKLYPLFSAVPLAVAA) traverse the membrane as a helical segment. Residues 95–101 (ESLRLGR) are Extracellular-facing. A helical transmembrane segment spans residues 102-122 (VWVFAFSLIGLAPLAERVSFL). Residues 123–134 (SEHIANTVGPTA) are Cytoplasmic-facing. A helical membrane pass occupies residues 135–155 (GGIMNATCGNVPELIIALFAL). Positions 143-178 (GNVPELIIALFALHKNKMEILKWSLLGSILSNLLLV) are cation selection. At 156-170 (HKNKMEILKWSLLGS) the chain is on the extracellular side. Residues 171 to 191 (ILSNLLLVLGSSLLFGGIVNI) form a helical membrane-spanning segment. Over 192-201 (GKERPLDKRQ) the chain is Cytoplasmic. The chain crosses the membrane as a helical span at residues 202-222 (ADVSIGLLLLGVLCHIATLVS). Over 223–239 (KYTSSTGDSINSSSVMQ) the chain is Extracellular. The chain crosses the membrane as a helical span at residues 240-260 (LSRSCAIVMLIAYFGSLMFQL). Residues 261-287 (KTHRQIFELEEDSSDSSSSEDDATDKS) are Cytoplasmic-facing. The helical transmembrane segment at 288–308 (VIGFASAMVWLIGMAVVTAML) threads the bilayer. The Extracellular portion of the chain corresponds to 309-331 (SSYVVTTIEEASESMGIPVRFIS). The chain crosses the membrane as a helical span at residues 332–352 (IILLPIVGNAAEHAGAIIFAF). The tract at residues 339-374 (GNAAEHAGAIIFAFKNKIDISLGITLGSATQISMLV) is cation selection. Residues 353–360 (KNKIDISL) lie on the Cytoplasmic side of the membrane. A helical membrane pass occupies residues 361–381 (GITLGSATQISMLVVPVILIV). Topologically, residues 382 to 385 (SWVN) are extracellular. Residues 386-406 (AIPMDLDFNLLETGSLAMAVI) traverse the membrane as a helical segment. Topologically, residues 407 to 424 (TTAFTLQDDKWHYLKGLN) are cytoplasmic. A helical membrane pass occupies residues 425–445 (LVFSYIVIAVCFFVMKALPTL). Topologically, residues 446–450 (KKEDD) are extracellular.

The protein belongs to the Ca(2+):cation antiporter (CaCA) (TC 2.A.19) family. Cation/proton exchanger (CAX) subfamily. As to expression, expressed in leaf blades.

Its subcellular location is the vacuole membrane. Vacuolar cation/proton exchanger (CAX). Translocates Ca(2+) and other metal ions into vacuoles using the proton gradient formed by H(+)-ATPase and H(+)-pyrophosphatase. The protein is Vacuolar cation/proton exchanger 1c (CAX1c) of Oryza sativa subsp. japonica (Rice).